The primary structure comprises 120 residues: Large ribosomal subunit protein uL18 (120 aa).

This sequence belongs to the universal ribosomal protein uL18 family. In terms of assembly, part of the 50S ribosomal subunit; part of the 5S rRNA/L5/L18/L25 subcomplex. Contacts the 5S and 23S rRNAs.

In terms of biological role, this is one of the proteins that bind and probably mediate the attachment of the 5S RNA into the large ribosomal subunit, where it forms part of the central protuberance. This chain is Large ribosomal subunit protein uL18, found in Gluconobacter oxydans (strain 621H) (Gluconobacter suboxydans).